Reading from the N-terminus, the 476-residue chain is GTPase Der (476 aa).

2 EngA-type G domains span residues 3–167 (FTVA…GEER) and 205–380 (LRVA…KVWN). Residues 9 to 16 (GRPNVGKS), 56 to 60 (DTAGL), 119 to 122 (NKSE), 211 to 218 (GRPNAGKS), 258 to 262 (DTAGM), and 323 to 326 (NKWD) each bind GTP. A KH-like domain is found at 381–465 (RRISTARLNR…PIRVHFRASE (85 aa)).

Belongs to the TRAFAC class TrmE-Era-EngA-EngB-Septin-like GTPase superfamily. EngA (Der) GTPase family. Associates with the 50S ribosomal subunit.

In terms of biological role, GTPase that plays an essential role in the late steps of ribosome biogenesis. The chain is GTPase Der from Rhizobium meliloti (strain 1021) (Ensifer meliloti).